Reading from the N-terminus, the 245-residue chain is 3-deoxy-manno-octulosonate cytidylyltransferase (245 aa).

The protein belongs to the KdsB family.

The protein localises to the cytoplasm. The catalysed reaction is 3-deoxy-alpha-D-manno-oct-2-ulosonate + CTP = CMP-3-deoxy-beta-D-manno-octulosonate + diphosphate. Its pathway is nucleotide-sugar biosynthesis; CMP-3-deoxy-D-manno-octulosonate biosynthesis; CMP-3-deoxy-D-manno-octulosonate from 3-deoxy-D-manno-octulosonate and CTP: step 1/1. It functions in the pathway bacterial outer membrane biogenesis; lipopolysaccharide biosynthesis. Functionally, activates KDO (a required 8-carbon sugar) for incorporation into bacterial lipopolysaccharide in Gram-negative bacteria. This chain is 3-deoxy-manno-octulosonate cytidylyltransferase, found in Fusobacterium nucleatum subsp. nucleatum (strain ATCC 25586 / DSM 15643 / BCRC 10681 / CIP 101130 / JCM 8532 / KCTC 2640 / LMG 13131 / VPI 4355).